The chain runs to 557 residues: Dihydroxy-acid dehydratase (557 aa).

C50 provides a ligand contact to [2Fe-2S] cluster. D82 contacts Mg(2+). C123 provides a ligand contact to [2Fe-2S] cluster. Mg(2+) is bound by residues D124 and K125. Residue K125 is modified to N6-carboxylysine. A [2Fe-2S] cluster-binding site is contributed by C195. Mg(2+) is bound at residue E447. S473 acts as the Proton acceptor in catalysis.

It belongs to the IlvD/Edd family. Homodimer. [2Fe-2S] cluster is required as a cofactor. It depends on Mg(2+) as a cofactor.

The catalysed reaction is (2R)-2,3-dihydroxy-3-methylbutanoate = 3-methyl-2-oxobutanoate + H2O. It carries out the reaction (2R,3R)-2,3-dihydroxy-3-methylpentanoate = (S)-3-methyl-2-oxopentanoate + H2O. It functions in the pathway amino-acid biosynthesis; L-isoleucine biosynthesis; L-isoleucine from 2-oxobutanoate: step 3/4. It participates in amino-acid biosynthesis; L-valine biosynthesis; L-valine from pyruvate: step 3/4. Its function is as follows. Functions in the biosynthesis of branched-chain amino acids. Catalyzes the dehydration of (2R,3R)-2,3-dihydroxy-3-methylpentanoate (2,3-dihydroxy-3-methylvalerate) into 2-oxo-3-methylpentanoate (2-oxo-3-methylvalerate) and of (2R)-2,3-dihydroxy-3-methylbutanoate (2,3-dihydroxyisovalerate) into 2-oxo-3-methylbutanoate (2-oxoisovalerate), the penultimate precursor to L-isoleucine and L-valine, respectively. The protein is Dihydroxy-acid dehydratase of Nitrosomonas eutropha (strain DSM 101675 / C91 / Nm57).